A 323-amino-acid chain; its full sequence is Leucine-rich repeat-containing protein 46 (323 aa).

LRR repeat units lie at residues 49–70, 71–92, 93–114, and 115–135; these read ELET…EKLR, NIHS…ACIT, SLRF…LDLQ, and YLQF…DELP. The LRRCT domain maps to 146 to 188; that stretch reads NPCTNQEGYRKMVIGALPLLLDLDKQPILERWTSDEEDKSSDD. Thr-178 bears the Phosphothreonine mark. Ser-179, Ser-185, and Ser-186 each carry phosphoserine. Residues 203–228 adopt a coiled-coil conformation; that stretch reads RGFFKDLEQELHQHQERRQQAALTEH. Residues 249-323 are disordered; the sequence is MAGDCSSTAT…TKMTNKKSTK (75 aa). Low complexity predominate over residues 267–316; that stretch reads PKATSSTQTASTTKKQVSKNQKSSVQARKGALAATTSKTSQAATPSMTKM. Phosphoserine is present on Ser-303.

As to expression, testis-specific (at protein level).

The protein localises to the cell projection. It is found in the cilium. Its subcellular location is the flagellum. Functionally, required for normal spermatogenesis and male fertility. Plays an important role in sperm flagellum biogenesis. In Mus musculus (Mouse), this protein is Leucine-rich repeat-containing protein 46 (Lrrc46).